We begin with the raw amino-acid sequence, 190 residues long: Histone-arginine methyltransferase METTL23 (190 aa).

Belongs to the methyltransferase superfamily. METTL23 family. As to quaternary structure, interacts with HSPA5, HSP90B1, TUBULIN, UGGT1 and UGGT2. Interacts with TET3. Interacts with STPG4.

The protein resides in the nucleus. Its subcellular location is the cytoplasm. It catalyses the reaction L-arginyl-[protein] + 2 S-adenosyl-L-methionine = N(omega),N(omega)-dimethyl-L-arginyl-[protein] + 2 S-adenosyl-L-homocysteine + 2 H(+). Functionally, histone methyltransferase that dimethylates histone H3 at 'Arg-17', forming asymmetric dimethylarginine (H3R17me2a), leading to activate transcription via chromatin remodeling. Maternal factor involved in epigenetic chromatin reprogramming of the paternal genome in the zygote: mediates H3R17me2a, promoting histone H3.3 incorporation in the male pronucleus, leading to TET3 recruitment and subsequent DNA demethylation. The protein is Histone-arginine methyltransferase METTL23 of Homo sapiens (Human).